The chain runs to 231 residues: Probable septum site-determining protein MinC (231 aa).

Positions 102–125 (KEKAPRPAPAPQAPAQNTTPVTKT) are disordered.

The protein belongs to the MinC family. Interacts with MinD and FtsZ.

Functionally, cell division inhibitor that blocks the formation of polar Z ring septums. Rapidly oscillates between the poles of the cell to destabilize FtsZ filaments that have formed before they mature into polar Z rings. Prevents FtsZ polymerization. This is Probable septum site-determining protein MinC from Escherichia coli O6:K15:H31 (strain 536 / UPEC).